The following is a 176-amino-acid chain: Ribosome rescue factor SmrB (176 aa).

The Smr domain occupies 97–172 (LDMHGMTQQE…GDGALLVLLS (76 aa)).

It belongs to the SmrB family. In terms of assembly, associates with collided ribosomes, but not with correctly translating polysomes.

Acts as a ribosome collision sensor. Detects stalled/collided disomes (pairs of ribosomes where the leading ribosome is stalled and a second ribosome has collided with it) and endonucleolytically cleaves mRNA at the 5' boundary of the stalled ribosome. Stalled/collided disomes form a new interface (primarily via the 30S subunits) that binds SmrB. Cleaved mRNA becomes available for tmRNA ligation, leading to ribosomal subunit dissociation and rescue of stalled ribosomes. The chain is Ribosome rescue factor SmrB from Vibrio campbellii (strain ATCC BAA-1116).